The following is a 127-amino-acid chain: Small ribosomal subunit protein uS11 (127 aa).

This sequence belongs to the universal ribosomal protein uS11 family. In terms of assembly, part of the 30S ribosomal subunit. Interacts with proteins S7 and S18. Binds to IF-3.

In terms of biological role, located on the platform of the 30S subunit, it bridges several disparate RNA helices of the 16S rRNA. Forms part of the Shine-Dalgarno cleft in the 70S ribosome. This Streptococcus thermophilus (strain CNRZ 1066) protein is Small ribosomal subunit protein uS11.